The chain runs to 269 residues: Putative ankyrin repeat protein L23 (269 aa).

ANK repeat units follow at residues 118–147 (EDDYAVKWASKNGHLKVVEYLVSLGADIKS), 148–177 (DGDYAVRWASENGHIDVVKYLVSQNADIRA), 179–207 (NDYAVKWASSNGHLEVVKYLVSQGANIRE), 208–237 (QNDYAIRLASQYGHLEVVKYLISLGADIRA), and 238–267 (DNDCAVRLASENGHIEIVNYLISQGADIRA).

This is Putative ankyrin repeat protein L23 from Acanthamoeba polyphaga (Amoeba).